A 199-amino-acid chain; its full sequence is MSRYTGPLFKKSRRFGYSILETNKEFSKGRKRTYAPGQHGNKRVKLSDYGLHLYEKQKVKLVFGVSEKQLLKTYKKAVKSKEITGTVLLQLLESRLDNLVYRAGFATTRRQARQLVNHGHFTIDGKKANIPSMQIKTGTTVVLKETSRKLKLVQEALEMQPASAWVTRKDFQFTFYRVPERTEMHKDIKEALVVEFYAK.

An S4 RNA-binding domain is found at 94–157 (SRLDNLVYRA…RKLKLVQEAL (64 aa)).

This sequence belongs to the universal ribosomal protein uS4 family. As to quaternary structure, part of the 30S ribosomal subunit. Contacts protein S5. The interaction surface between S4 and S5 is involved in control of translational fidelity.

Its function is as follows. One of the primary rRNA binding proteins, it binds directly to 16S rRNA where it nucleates assembly of the body of the 30S subunit. Functionally, with S5 and S12 plays an important role in translational accuracy. The chain is Small ribosomal subunit protein uS4 from Mycoplasmopsis synoviae (strain 53) (Mycoplasma synoviae).